A 378-amino-acid chain; its full sequence is Ribosomal RNA large subunit methyltransferase G (378 aa).

It belongs to the methyltransferase superfamily. RlmG family.

The protein localises to the cytoplasm. The enzyme catalyses guanosine(1835) in 23S rRNA + S-adenosyl-L-methionine = N(2)-methylguanosine(1835) in 23S rRNA + S-adenosyl-L-homocysteine + H(+). Functionally, specifically methylates the guanine in position 1835 (m2G1835) of 23S rRNA. The sequence is that of Ribosomal RNA large subunit methyltransferase G from Shigella boydii serotype 18 (strain CDC 3083-94 / BS512).